A 181-amino-acid chain; its full sequence is ATP synthase subunit b (181 aa).

The chain crosses the membrane as a helical span at residues 24–44 (LFPNLPNFIAHLLATIILVIV).

It belongs to the ATPase B chain family. As to quaternary structure, F-type ATPases have 2 components, F(1) - the catalytic core - and F(0) - the membrane proton channel. F(1) has five subunits: alpha(3), beta(3), gamma(1), delta(1), epsilon(1). F(0) has three main subunits: a(1), b(2) and c(10-14). The alpha and beta chains form an alternating ring which encloses part of the gamma chain. F(1) is attached to F(0) by a central stalk formed by the gamma and epsilon chains, while a peripheral stalk is formed by the delta and b chains.

The protein resides in the cell membrane. Functionally, f(1)F(0) ATP synthase produces ATP from ADP in the presence of a proton or sodium gradient. F-type ATPases consist of two structural domains, F(1) containing the extramembraneous catalytic core and F(0) containing the membrane proton channel, linked together by a central stalk and a peripheral stalk. During catalysis, ATP synthesis in the catalytic domain of F(1) is coupled via a rotary mechanism of the central stalk subunits to proton translocation. In terms of biological role, component of the F(0) channel, it forms part of the peripheral stalk, linking F(1) to F(0). In Mycoplasma mycoides subsp. mycoides SC (strain CCUG 32753 / NCTC 10114 / PG1), this protein is ATP synthase subunit b.